The primary structure comprises 205 residues: LexA repressor (205 aa).

The H-T-H motif DNA-binding region spans 28-48; it reads RAELMRAFDFRSPNAAESHLR. Catalysis depends on for autocatalytic cleavage activity residues serine 120 and lysine 159.

The protein belongs to the peptidase S24 family. As to quaternary structure, homodimer.

The enzyme catalyses Hydrolysis of Ala-|-Gly bond in repressor LexA.. Functionally, represses a number of genes involved in the response to DNA damage (SOS response), including recA and lexA. In the presence of single-stranded DNA, RecA interacts with LexA causing an autocatalytic cleavage which disrupts the DNA-binding part of LexA, leading to derepression of the SOS regulon and eventually DNA repair. The protein is LexA repressor of Acidithiobacillus ferrooxidans (strain ATCC 23270 / DSM 14882 / CIP 104768 / NCIMB 8455) (Ferrobacillus ferrooxidans (strain ATCC 23270)).